A 205-amino-acid polypeptide reads, in one-letter code: Ribosomal RNA large subunit methyltransferase E (205 aa).

5 residues coordinate S-adenosyl-L-methionine: Gly-50, Trp-52, Asp-67, Asn-83, and Asp-111. Lys-151 acts as the Proton acceptor in catalysis.

It belongs to the class I-like SAM-binding methyltransferase superfamily. RNA methyltransferase RlmE family.

It is found in the cytoplasm. It catalyses the reaction uridine(2552) in 23S rRNA + S-adenosyl-L-methionine = 2'-O-methyluridine(2552) in 23S rRNA + S-adenosyl-L-homocysteine + H(+). In terms of biological role, specifically methylates the uridine in position 2552 of 23S rRNA at the 2'-O position of the ribose in the fully assembled 50S ribosomal subunit. This Thermoplasma acidophilum (strain ATCC 25905 / DSM 1728 / JCM 9062 / NBRC 15155 / AMRC-C165) protein is Ribosomal RNA large subunit methyltransferase E.